The following is a 189-amino-acid chain: Large ribosomal subunit protein bL12c (189 aa).

Disordered stretches follow at residues 1–30 and 165–189; these read MAAT…HPQP and EGVS…VSIV. Residues 1–56 constitute a chloroplast transit peptide; sequence MAATTTMATLNLPSLTSHPNSSTFPKHPQPLQFPFRTTTNPISLSSTRTTRLRPIA. Polar residues predominate over residues 11-24; sequence NLPSLTSHPNSSTF. Residues 165–183 are compositionally biased toward basic and acidic residues; sequence EGVSKDDAEDAKKQLEDAG.

Component of the chloroplast large ribosomal subunit (LSU). Mature 70S chloroplast ribosomes of higher plants consist of a small (30S) and a large (50S) subunit. The 30S small subunit contains 1 molecule of ribosomal RNA (16S rRNA) and 24 different proteins. The 50S large subunit contains 3 rRNA molecules (23S, 5S and 4.5S rRNA) and 33 different proteins.

The protein resides in the plastid. Its subcellular location is the chloroplast. Its function is as follows. Component of the chloroplast ribosome (chloro-ribosome), a dedicated translation machinery responsible for the synthesis of chloroplast genome-encoded proteins, including proteins of the transcription and translation machinery and components of the photosynthetic apparatus. The protein is Large ribosomal subunit protein bL12c (RPL12) of Spinacia oleracea (Spinach).